Consider the following 144-residue polypeptide: INO80 complex subunit 5 (144 aa).

Residues 1–58 (MAAQKKQGERVLPARSTRKRRQLPDMLYYDERTDSYVTPQERSLSEANAQTRPAPNTI) form a disordered region. The segment covering 35–58 (SYVTPQERSLSEANAQTRPAPNTI) has biased composition (polar residues).

Component of the INO80 chromatin remodeling complex.

It localises to the nucleus. Component of the INO80 complex which remodels chromatin by shifting nucleosomes and is involved in DNA repair. The polypeptide is INO80 complex subunit 5 (iec5) (Schizosaccharomyces pombe (strain 972 / ATCC 24843) (Fission yeast)).